The chain runs to 314 residues: Taste receptor type 2 member 42 (314 aa).

Topologically, residues 1 to 7 are extracellular; the sequence is MPTELDK. The chain crosses the membrane as a helical span at residues 8–28; sequence IFLILAIVEFIIGLLGNVFIG. The Cytoplasmic portion of the chain corresponds to 29-50; the sequence is LVNCSEGIKNQKVFSADFILTC. Residues 51 to 71 traverse the membrane as a helical segment; sequence LAISTIGQLLVILFDSFLVGL. At 72-101 the chain is on the extracellular side; that stretch reads ASHLYTTYRLGKLVILLWHMTNHLTTWLAT. The chain crosses the membrane as a helical span at residues 102-122; the sequence is CLSIFYFFKIAHFPHSLFLWL. The Cytoplasmic segment spans residues 123–127; sequence RWRMN. A helical transmembrane segment spans residues 128–148; that stretch reads GMIVMLRTLSLFLLIFDSLVL. Residues 149–187 lie on the Extracellular side of the membrane; that stretch reads KLFIDISLNIIDKSNLTLYFDESKTLYDKLSILKTLLSL. Asn-163 carries N-linked (GlcNAc...) asparagine glycosylation. The helical transmembrane segment at 188–208 threads the bilayer; sequence TSFIPFSLSLTSLLFLFLSLV. At 209-238 the chain is on the cytoplasmic side; it reads RHTRNLKLSSLGSRDSSTEAHRRAMKMVMS. The chain crosses the membrane as a helical span at residues 239 to 259; that stretch reads FLFLFIVHFFSLQVANWIFFM. Topologically, residues 260-265 are extracellular; that stretch reads SWNNKY. The helical transmembrane segment at 266 to 286 threads the bilayer; it reads IKFVMLALNAFPSCHSFILIL. The Cytoplasmic segment spans residues 287–314; sequence GNSKLRQTAVRLLSHLRNYTKTSNPLPL.

This sequence belongs to the G-protein coupled receptor T2R family.

The protein localises to the membrane. Receptor that may play a role in the perception of bitterness and is gustducin-linked. May play a role in sensing the chemical composition of the gastrointestinal content. The activity of this receptor may stimulate alpha gustducin, mediate PLC-beta-2 activation and lead to the gating of TRPM5. The sequence is that of Taste receptor type 2 member 42 (TAS2R42) from Pongo pygmaeus (Bornean orangutan).